The sequence spans 476 residues: MAGNVQEKQLRWYNIALMSFITVWGFGNVVNNYANQGLVVVFSWVFIFALYFTPYALIVGQLGSTFKDGKGGVSTWIKHTMGPGLAYLAAWTYWVVHIPYLAQKPQAILIALGWAMKGDGSLIKEYSVVALQGLTLVLFIFFMWVASRGMKSLKIVGSVAGIAMFVMSLLYVAMAVTAPAITEVHIATTNITWETFIPHIDFTYITTISMLVFAVGGAEKISPYVNQTRNPGKEFPKGMLCLAVMVAVCAILGSLAMGMMFDSRNIPDDLMTNGQYYAFQKLGEYYNMGNTLMVIYAIANTLGQVAALVFSIDAPLKVLLGDADSKYIPASLCRTNASGTPVNGYFLTLVLVAILIMLPTLGIGDMNNLYKWLLNLNSVVMPLRYLWVFVAFIAVVRLAQKYKPEYVFIRNKPLAMTVGIWCFAFTAFACLTGIFPKMEAFTAEWTFQLALNVATPFVLVGLGLIFPLLARKANSK.

Over 1-9 (MAGNVQEKQ) the chain is Cytoplasmic. The helical transmembrane segment at 10–30 (LRWYNIALMSFITVWGFGNVV) threads the bilayer. The Periplasmic portion of the chain corresponds to 31–38 (NNYANQGL). The chain crosses the membrane as a helical span at residues 39–59 (VVVFSWVFIFALYFTPYALIV). At 60 to 80 (GQLGSTFKDGKGGVSTWIKHT) the chain is on the cytoplasmic side. A helical membrane pass occupies residues 81–101 (MGPGLAYLAAWTYWVVHIPYL). The Periplasmic portion of the chain corresponds to 102–125 (AQKPQAILIALGWAMKGDGSLIKE). A helical membrane pass occupies residues 126–146 (YSVVALQGLTLVLFIFFMWVA). The Cytoplasmic portion of the chain corresponds to 147 to 154 (SRGMKSLK). The helical transmembrane segment at 155–175 (IVGSVAGIAMFVMSLLYVAMA) threads the bilayer. Topologically, residues 176 to 195 (VTAPAITEVHIATTNITWET) are periplasmic. The chain crosses the membrane as a helical span at residues 196–216 (FIPHIDFTYITTISMLVFAVG). The Cytoplasmic portion of the chain corresponds to 217-240 (GAEKISPYVNQTRNPGKEFPKGML). Residues 241-261 (CLAVMVAVCAILGSLAMGMMF) traverse the membrane as a helical segment. At 262-291 (DSRNIPDDLMTNGQYYAFQKLGEYYNMGNT) the chain is on the periplasmic side. The helical transmembrane segment at 292–312 (LMVIYAIANTLGQVAALVFSI) threads the bilayer. Topologically, residues 313-343 (DAPLKVLLGDADSKYIPASLCRTNASGTPVN) are cytoplasmic. A helical membrane pass occupies residues 344–364 (GYFLTLVLVAILIMLPTLGIG). The Periplasmic segment spans residues 365-375 (DMNNLYKWLLN). The chain crosses the membrane as a helical span at residues 376 to 396 (LNSVVMPLRYLWVFVAFIAVV). The Cytoplasmic segment spans residues 397-414 (RLAQKYKPEYVFIRNKPL). A helical transmembrane segment spans residues 415 to 435 (AMTVGIWCFAFTAFACLTGIF). Over 436 to 448 (PKMEAFTAEWTFQ) the chain is Periplasmic. The chain crosses the membrane as a helical span at residues 449–469 (LALNVATPFVLVGLGLIFPLL). At 470–476 (ARKANSK) the chain is on the cytoplasmic side.

The protein belongs to the amino acid-polyamine-organocation (APC) superfamily.

It localises to the cell inner membrane. This Escherichia coli (strain K12) protein is Inner membrane transporter YcaM (ycaM).